The primary structure comprises 534 residues: Serine/threonine-protein kinase 35 (534 aa).

A disordered region spans residues 32–176 (VESHGSLGAQ…AAAARAMDPV (145 aa)). Composition is skewed to low complexity over residues 39–65 (GAQASPASAAAAEGSATRRARAATSRA) and 166–176 (PAAAARAMDPV). The region spanning 202-530 (YSLLAEIGRG…FELETRMDQV (329 aa)) is the Protein kinase domain. ATP-binding positions include 208-216 (IGRGSYGVV) and K231. The Proton acceptor role is filled by D360.

The protein belongs to the protein kinase superfamily. Ser/Thr protein kinase family. As to quaternary structure, interacts with PDLIM1/CLP-36. In terms of processing, autophosphorylated. Expressed in testis.

Its subcellular location is the nucleus. The protein localises to the nucleolus. The protein resides in the cytoplasm. It catalyses the reaction L-seryl-[protein] + ATP = O-phospho-L-seryl-[protein] + ADP + H(+). The catalysed reaction is L-threonyl-[protein] + ATP = O-phospho-L-threonyl-[protein] + ADP + H(+). The chain is Serine/threonine-protein kinase 35 (STK35) from Homo sapiens (Human).